A 72-amino-acid polypeptide reads, in one-letter code: Cytochrome b-c1 complex subunit 8 (72 aa).

The Mitochondrial matrix segment spans residues 2 to 41 (GKQPVKLKAVVYAISPFQQKIMPGLWKDLPGKIHHKVSEN). The chain crosses the membrane as a helical span at residues 42–59 (WISATLLLGPLVGTYSYV). The Mitochondrial intermembrane portion of the chain corresponds to 60–72 (QHFLEKEKLEHRY).

Belongs to the UQCRQ/QCR8 family. In terms of assembly, component of the ubiquinol-cytochrome c oxidoreductase (cytochrome b-c1 complex, complex III, CIII), a multisubunit enzyme composed of 3 respiratory subunits cytochrome b, cytochrome c1 and Rieske protein, 2 core protein subunits, and additional low-molecular weight protein subunits. The complex exists as an obligatory dimer and forms supercomplexes (SCs) in the inner mitochondrial membrane with cytochrome c oxidase (complex IV, CIV).

It localises to the mitochondrion inner membrane. In terms of biological role, component of the ubiquinol-cytochrome c oxidoreductase, a multisubunit transmembrane complex that is part of the mitochondrial electron transport chain which drives oxidative phosphorylation. The respiratory chain contains 3 multisubunit complexes succinate dehydrogenase (complex II, CII), ubiquinol-cytochrome c oxidoreductase (cytochrome b-c1 complex, complex III, CIII) and cytochrome c oxidase (complex IV, CIV), that cooperate to transfer electrons derived from NADH and succinate to molecular oxygen, creating an electrochemical gradient over the inner membrane that drives transmembrane transport and the ATP synthase. The cytochrome b-c1 complex catalyzes electron transfer from ubiquinol to cytochrome c, linking this redox reaction to translocation of protons across the mitochondrial inner membrane, with protons being carried across the membrane as hydrogens on the quinol. In the process called Q cycle, 2 protons are consumed from the matrix, 4 protons are released into the intermembrane space and 2 electrons are passed to cytochrome c. This chain is Cytochrome b-c1 complex subunit 8, found in Solanum tuberosum (Potato).